Consider the following 206-residue polypeptide: MSVCLAVTKTVAVSSLGIYCGMLTSACVASYAAPVDVLTQLAKPARVIARVGGALAAVSSAFFALSYFGAPAHWRHPYLLYGMLVAPVSAAYVAVVARVRGAHCRRACEKRRAQSASVHASTPASAAPEPALDDSVVDLGAAAAAAESAPETHVTSAEHVPVSHHVTPASAACARAAARHAAVLLLPAAAGLLGSVLGLYGEGLFV.

The next 4 helical transmembrane spans lie at 13–35 (VSSLGIYCGMLTSACVASYAAPV), 51–71 (VGGALAAVSSAFFALSYFGAP), 77–97 (PYLLYGMLVAPVSAAYVAVVA), and 181–201 (AAVLLLPAAAGLLGSVLGLYG).

This sequence belongs to the ATG33 family.

The protein localises to the mitochondrion membrane. Its function is as follows. Involved in the selective degradation of mitochondria via autophagy during starvation and at post-log phase. This chain is Autophagy-related protein 33 (ATG33), found in Lachancea thermotolerans (strain ATCC 56472 / CBS 6340 / NRRL Y-8284) (Yeast).